Reading from the N-terminus, the 202-residue chain is Succinate dehydrogenase cytochrome b558 subunit (202 aa).

The next 5 membrane-spanning stretches (helical) occupy residues 12-31 (LHSLLGVIPVGIFLIQHLVV), 60-79 (IFIIFLPLIYHAVYGVYIAF), 93-113 (NWLFVLQRVTGIITLIFVSWH), 135-155 (ILSSPAMLGFYIVGVLSTIFH), and 178-196 (ISTYVTLIIFVALSYVGLK). Positions 28, 70, 113, and 155 each coordinate heme.

This sequence belongs to the cytochrome b558 family. Part of an enzyme complex containing three subunits: a flavoprotein, an iron-sulfur protein and cytochrome b-558.

It is found in the cell membrane. The protein operates within carbohydrate metabolism; tricarboxylic acid cycle. In terms of biological role, di-heme cytochrome of the succinate dehydrogenase complex. This chain is Succinate dehydrogenase cytochrome b558 subunit (sdhC), found in Bacillus subtilis (strain 168).